Consider the following 220-residue polypeptide: Deoxyribose-phosphate aldolase (220 aa).

D89 acts as the Proton donor/acceptor in catalysis. Residue K151 is the Schiff-base intermediate with acetaldehyde of the active site. The active-site Proton donor/acceptor is the K180.

The protein belongs to the DeoC/FbaB aldolase family. DeoC type 1 subfamily.

Its subcellular location is the cytoplasm. The catalysed reaction is 2-deoxy-D-ribose 5-phosphate = D-glyceraldehyde 3-phosphate + acetaldehyde. It participates in carbohydrate degradation; 2-deoxy-D-ribose 1-phosphate degradation; D-glyceraldehyde 3-phosphate and acetaldehyde from 2-deoxy-alpha-D-ribose 1-phosphate: step 2/2. Its function is as follows. Catalyzes a reversible aldol reaction between acetaldehyde and D-glyceraldehyde 3-phosphate to generate 2-deoxy-D-ribose 5-phosphate. The protein is Deoxyribose-phosphate aldolase of Streptococcus suis (strain 98HAH33).